Here is a 154-residue protein sequence, read N- to C-terminus: Large ribosomal subunit protein uL13 (154 aa).

Belongs to the universal ribosomal protein uL13 family. In terms of assembly, part of the 50S ribosomal subunit.

Functionally, this protein is one of the early assembly proteins of the 50S ribosomal subunit, although it is not seen to bind rRNA by itself. It is important during the early stages of 50S assembly. This is Large ribosomal subunit protein uL13 from Brucella anthropi (strain ATCC 49188 / DSM 6882 / CCUG 24695 / JCM 21032 / LMG 3331 / NBRC 15819 / NCTC 12168 / Alc 37) (Ochrobactrum anthropi).